The sequence spans 391 residues: DNA replication and repair protein RecF (391 aa).

An ATP-binding site is contributed by 30 to 37 (GSNGQGKT).

It belongs to the RecF family.

It is found in the cytoplasm. In terms of biological role, the RecF protein is involved in DNA metabolism; it is required for DNA replication and normal SOS inducibility. RecF binds preferentially to single-stranded, linear DNA. It also seems to bind ATP. This is DNA replication and repair protein RecF from Saccharopolyspora erythraea (strain ATCC 11635 / DSM 40517 / JCM 4748 / NBRC 13426 / NCIMB 8594 / NRRL 2338).